Consider the following 213-residue polypeptide: Charged multivesicular body protein 2b (213 aa).

Residue A2 is modified to N-acetylalanine. A coiled-coil region spans residues 25 to 55 (QRAIIRDRAALEKQEKQLELEIKKMAKIGNK). The segment covering 179 to 194 (AKAPSAARSLPSASTS) has biased composition (low complexity). Residues 179–199 (AKAPSAARSLPSASTSKATIS) form a disordered region. Phosphoserine is present on S199. Residues 201 to 211 (EEIERQLKALG) carry the MIT-interacting motif motif.

Belongs to the SNF7 family. As to quaternary structure, probable core component of the endosomal sorting required for transport complex III (ESCRT-III). ESCRT-III components are thought to multimerize to form a flat lattice on the perimeter membrane of the endosome. Several assembly forms of ESCRT-III may exist that interact and act sequentially. Interacts with CHMP2A. Interacts with VPS4A. Interacts with VPS4B; the interaction is direct. As to expression, widely expressed. Expressed in brain, heart, skeletal muscle, spleen, kidney, liver, small intestine, pancreas, lung, placenta and leukocytes. In brain, it is expressed in cerebellum, cerebral cortex, medulla, spinal cord, occipital lobe, frontal lobe, temporal lobe and putamen.

Its subcellular location is the cytoplasm. The protein resides in the cytosol. It is found in the late endosome membrane. Probable core component of the endosomal sorting required for transport complex III (ESCRT-III) which is involved in multivesicular bodies (MVBs) formation and sorting of endosomal cargo proteins into MVBs. MVBs contain intraluminal vesicles (ILVs) that are generated by invagination and scission from the limiting membrane of the endosome and mostly are delivered to lysosomes enabling degradation of membrane proteins, such as stimulated growth factor receptors, lysosomal enzymes and lipids. The MVB pathway appears to require the sequential function of ESCRT-O, -I,-II and -III complexes. ESCRT-III proteins mostly dissociate from the invaginating membrane before the ILV is released. The ESCRT machinery also functions in topologically equivalent membrane fission events, such as the terminal stages of cytokinesis and the budding of enveloped viruses (HIV-1 and other lentiviruses). ESCRT-III proteins are believed to mediate the necessary vesicle extrusion and/or membrane fission activities, possibly in conjunction with the AAA ATPase VPS4. In Homo sapiens (Human), this protein is Charged multivesicular body protein 2b (CHMP2B).